The chain runs to 143 residues: Transcriptional regulator MraZ (143 aa).

SpoVT-AbrB domains lie at 5–47 (TYAP…SQRE) and 76–119 (ASAE…DAEA).

Belongs to the MraZ family. In terms of assembly, forms oligomers.

The protein localises to the cytoplasm. It localises to the nucleoid. This is Transcriptional regulator MraZ from Leifsonia xyli subsp. xyli (strain CTCB07).